The primary structure comprises 134 residues: Small ribosomal subunit protein uS11 (134 aa).

The protein belongs to the universal ribosomal protein uS11 family. In terms of assembly, component of the small ribosomal subunit.

The protein localises to the cytoplasm. The sequence is that of Small ribosomal subunit protein uS11 (RPS14) from Encephalitozoon cuniculi (strain GB-M1) (Microsporidian parasite).